The chain runs to 338 residues: Glyceraldehyde-3-phosphate dehydrogenase (338 aa).

NAD(+) contacts are provided by residues 12-13 (RI), aspartate 34, and arginine 79. D-glyceraldehyde 3-phosphate-binding positions include 150 to 152 (SCT), threonine 181, 210 to 211 (TG), and arginine 233. Cysteine 151 acts as the Nucleophile in catalysis. Asparagine 316 provides a ligand contact to NAD(+).

Belongs to the glyceraldehyde-3-phosphate dehydrogenase family. As to quaternary structure, homotetramer.

It is found in the cytoplasm. The catalysed reaction is D-glyceraldehyde 3-phosphate + phosphate + NAD(+) = (2R)-3-phospho-glyceroyl phosphate + NADH + H(+). It functions in the pathway carbohydrate degradation; glycolysis; pyruvate from D-glyceraldehyde 3-phosphate: step 1/5. The chain is Glyceraldehyde-3-phosphate dehydrogenase (GPD) from Phaffia rhodozyma (Yeast).